Reading from the N-terminus, the 364-residue chain is Putative apoptosis inhibitor ORF42 (364 aa).

A BIR 1 repeat occupies 24–89 (RLATFRGYEY…CREGVVSAPQ (66 aa)). The segment at 83 to 126 (GVVSAPQQQPPPPPSTSIGAVGGDPRPEDMNVPERGWDPPMSKD) is disordered. A compositionally biased stretch (basic and acidic residues) spans 117-126 (RGWDPPMSKD). BIR repeat units lie at residues 127 to 193 (PKST…PLVV) and 236 to 300 (RIAS…ANMA). Residues 315–350 (CVICLGAKADTILKPCLHYSLCYGCSTQVQKCPLCR) form an RING-type zinc finger.

Functionally, may act as an apoptosis inhibitor. In Magallana gigas (Pacific oyster), this protein is Putative apoptosis inhibitor ORF42.